The sequence spans 98 residues: Co-chaperonin GroES (98 aa).

The protein belongs to the GroES chaperonin family. In terms of assembly, heptamer of 7 subunits arranged in a ring. Interacts with the chaperonin GroEL.

Its subcellular location is the cytoplasm. Functionally, together with the chaperonin GroEL, plays an essential role in assisting protein folding. The GroEL-GroES system forms a nano-cage that allows encapsulation of the non-native substrate proteins and provides a physical environment optimized to promote and accelerate protein folding. GroES binds to the apical surface of the GroEL ring, thereby capping the opening of the GroEL channel. This chain is Co-chaperonin GroES, found in Beutenbergia cavernae (strain ATCC BAA-8 / DSM 12333 / CCUG 43141 / JCM 11478 / NBRC 16432 / NCIMB 13614 / HKI 0122).